The primary structure comprises 678 residues: UvrABC system protein B (678 aa).

Positions 26 to 185 constitute a Helicase ATP-binding domain; it reads EGLEDGEAFQ…LTTMQYTRND (160 aa). 39–46 serves as a coordination point for ATP; it reads GVTGSGKT. The short motif at 92–115 is the Beta-hairpin element; sequence YYDYYQPEAYVPASDTYIAKDSSV. A Helicase C-terminal domain is found at 430–596; the sequence is QVDDLLGEIR…KLNKKITDIL (167 aa). The disordered stretch occupies residues 597–630; sequence EDSPYAPKPGASAAKLKAAEADGEYSPQEMQRMT. Residues 635–670 enclose the UVR domain; sequence ASEIKRMEKQMYQAAKDLDFELAAKLRDDLKRLKSS.

It belongs to the UvrB family. Forms a heterotetramer with UvrA during the search for lesions. Interacts with UvrC in an incision complex.

The protein localises to the cytoplasm. The UvrABC repair system catalyzes the recognition and processing of DNA lesions. A damage recognition complex composed of 2 UvrA and 2 UvrB subunits scans DNA for abnormalities. Upon binding of the UvrA(2)B(2) complex to a putative damaged site, the DNA wraps around one UvrB monomer. DNA wrap is dependent on ATP binding by UvrB and probably causes local melting of the DNA helix, facilitating insertion of UvrB beta-hairpin between the DNA strands. Then UvrB probes one DNA strand for the presence of a lesion. If a lesion is found the UvrA subunits dissociate and the UvrB-DNA preincision complex is formed. This complex is subsequently bound by UvrC and the second UvrB is released. If no lesion is found, the DNA wraps around the other UvrB subunit that will check the other stand for damage. The sequence is that of UvrABC system protein B from Hydrogenovibrio crunogenus (strain DSM 25203 / XCL-2) (Thiomicrospira crunogena).